A 486-amino-acid polypeptide reads, in one-letter code: Cardiolipin synthase A (486 aa).

A run of 2 helical transmembrane segments spans residues 3–23 (TFYT…IAGV) and 38–58 (MAWL…YLSF). PLD phosphodiesterase domains follow at residues 219–246 (MDLR…VDPR) and 399–426 (EGGL…DMRS). Catalysis depends on residues His-224, Lys-226, Asp-231, His-404, Lys-406, and Asp-411.

This sequence belongs to the phospholipase D family. Cardiolipin synthase subfamily. ClsA sub-subfamily.

It is found in the cell inner membrane. The catalysed reaction is 2 a 1,2-diacyl-sn-glycero-3-phospho-(1'-sn-glycerol) = a cardiolipin + glycerol. Functionally, catalyzes the reversible phosphatidyl group transfer from one phosphatidylglycerol molecule to another to form cardiolipin (CL) (diphosphatidylglycerol) and glycerol. The chain is Cardiolipin synthase A from Klebsiella pneumoniae (strain 342).